The chain runs to 268 residues: Mediator of RNA polymerase II transcription subunit 18 (268 aa).

The protein belongs to the Mediator complex subunit 18 family. In terms of assembly, component of the Mediator complex.

The protein resides in the nucleus. Its function is as follows. Component of the Mediator complex, a coactivator involved in the regulated transcription of nearly all RNA polymerase II-dependent genes. Mediator functions as a bridge to convey information from gene-specific regulatory proteins to the basal RNA polymerase II transcription machinery. Mediator is recruited to promoters by direct interactions with regulatory proteins and serves as a scaffold for the assembly of a functional preinitiation complex with RNA polymerase II and the general transcription factors. The protein is Mediator of RNA polymerase II transcription subunit 18 (srb5) of Neosartorya fischeri (strain ATCC 1020 / DSM 3700 / CBS 544.65 / FGSC A1164 / JCM 1740 / NRRL 181 / WB 181) (Aspergillus fischerianus).